A 234-amino-acid chain; its full sequence is Probable transcriptional regulatory protein MYCGA1330 (234 aa).

Belongs to the TACO1 family.

Its subcellular location is the cytoplasm. The protein is Probable transcriptional regulatory protein MYCGA1330 of Mycoplasmoides gallisepticum (strain R(low / passage 15 / clone 2)) (Mycoplasma gallisepticum).